Consider the following 248-residue polypeptide: 2,3-bisphosphoglycerate-dependent phosphoglycerate mutase (248 aa).

Residues 8-15, 21-22, R60, 87-90, K98, 114-115, and 183-184 each bind substrate; these read RHGESEWN, TG, ERHY, RR, and GN. Residue H9 is the Tele-phosphohistidine intermediate of the active site. Catalysis depends on E87, which acts as the Proton donor/acceptor.

The protein belongs to the phosphoglycerate mutase family. BPG-dependent PGAM subfamily.

It carries out the reaction (2R)-2-phosphoglycerate = (2R)-3-phosphoglycerate. It participates in carbohydrate degradation; glycolysis; pyruvate from D-glyceraldehyde 3-phosphate: step 3/5. Functionally, catalyzes the interconversion of 2-phosphoglycerate and 3-phosphoglycerate. This is 2,3-bisphosphoglycerate-dependent phosphoglycerate mutase from Borrelia turicatae (strain 91E135).